Here is a 346-residue protein sequence, read N- to C-terminus: Histone PARylation factor 1 (346 aa).

At M1 the chain carries N-acetylmethionine. Residues 1–23 (MVGGGGKRRPGGEGPQCEKTTDV) are disordered. K19 is modified (N6-acetyllysine). The residue at position 97 (S97) is an ADP-ribosylserine. An N6-acetyllysine mark is found at K186 and K233. The residue at position 235 (D235) is a PolyADP-ribosyl aspartic acid. ADP-ribosyltyrosine is present on Y238. E240 is modified (polyADP-ribosyl glutamic acid). Positions 242–346 (PETDADLKRI…SQENIDQLAA (105 aa)) are interaction with PARP1. Residue E284 is the Proton donor of the active site.

Belongs to the HPF1 family. In terms of assembly, interacts with PARP1 (via the PARP catalytic domain). Interacts with PARP2 (via the PARP catalytic domain). Interacts with core nucleosomes in a PARP1- and PARP2-dependent manner.

The protein resides in the chromosome. Its subcellular location is the nucleus. Functionally, cofactor for serine ADP-ribosylation that confers serine specificity on PARP1 and PARP2 and plays a key role in DNA damage response. Initiates the repair of double-strand DNA breaks: recruited to DNA damage sites by PARP1 and PARP2 and switches the amino acid specificity of PARP1 and PARP2 from aspartate or glutamate to serine residues, licensing serine ADP-ribosylation of target proteins. Serine ADP-ribosylation of target proteins, such as histones, promotes decompaction of chromatin and the recruitment of repair factors leading to the reparation of DNA strand breaks. Serine ADP-ribosylation of proteins constitutes the primary form of ADP-ribosylation of proteins in response to DNA damage. HPF1 acts by completing the active site of PARP1 and PARP2: forms a composite active site composed of residues from HPF1 and PARP1 or PARP2. While HPF1 promotes the initiation of serine ADP-ribosylation, it restricts the polymerase activity of PARP1 and PARP2 in order to limit the length of poly-ADP-ribose chains. HPF1 also promotes tyrosine ADP-ribosylation, probably by conferring tyrosine specificity on PARP1. The sequence is that of Histone PARylation factor 1 from Homo sapiens (Human).